A 431-amino-acid polypeptide reads, in one-letter code: Galactose-3-O-sulfotransferase 3 (431 aa).

Topologically, residues 1–19 (MPPILQRLQQATKMMSRRK) are cytoplasmic. The chain crosses the membrane as a helical; Signal-anchor for type II membrane protein span at residues 20-40 (ILLLVLGCSTVSLLIHQGAQL). The Lumenal portion of the chain corresponds to 41–431 (SWYPKLFPLS…RVLPRGPQGP (391 aa)). N91, N110, N177, and N302 each carry an N-linked (GlcNAc...) asparagine glycan. The disordered stretch occupies residues 399-431 (QKRRGGARARPEPVLDNPPPRPIRVLPRGPQGP).

Belongs to the galactose-3-O-sulfotransferase family. The cofactor is Mg(2+). Highly expressed in thyroid, brain, kidney, heart and spinal cord.

The protein resides in the golgi apparatus. Its subcellular location is the golgi stack membrane. It functions in the pathway protein modification; carbohydrate sulfation. Its function is as follows. Transfers a sulfate to position 3 of non-reducing beta-galactosyl residues in N-glycans and core2-branched O-glycans. Has high activity towards Gal-beta-1,4-GlcNAc, Gal-beta-1,4(Fuc-alpha-1,3)GlcNAc and lower activity towards Gal-beta-1,3(Fuc-alpha-1,4)GlcNAc. In Homo sapiens (Human), this protein is Galactose-3-O-sulfotransferase 3 (GAL3ST3).